The following is a 70-amino-acid chain: uncharacterized protein (70 aa).

A helical transmembrane segment spans residues 14-34 (CLVVWFACVYSLLILVVLLLI).

The protein resides in the virion membrane. This is an uncharacterized protein from Homo sapiens (Human).